Here is a 406-residue protein sequence, read N- to C-terminus: Arginine biosynthesis bifunctional protein ArgJ (406 aa).

The substrate site is built by threonine 152, lysine 179, threonine 190, glutamate 277, asparagine 401, and serine 406. The active-site Nucleophile is the threonine 190.

The protein belongs to the ArgJ family. Heterotetramer of two alpha and two beta chains.

The protein resides in the cytoplasm. It carries out the reaction N(2)-acetyl-L-ornithine + L-glutamate = N-acetyl-L-glutamate + L-ornithine. It catalyses the reaction L-glutamate + acetyl-CoA = N-acetyl-L-glutamate + CoA + H(+). Its pathway is amino-acid biosynthesis; L-arginine biosynthesis; L-ornithine and N-acetyl-L-glutamate from L-glutamate and N(2)-acetyl-L-ornithine (cyclic): step 1/1. The protein operates within amino-acid biosynthesis; L-arginine biosynthesis; N(2)-acetyl-L-ornithine from L-glutamate: step 1/4. In terms of biological role, catalyzes two activities which are involved in the cyclic version of arginine biosynthesis: the synthesis of N-acetylglutamate from glutamate and acetyl-CoA as the acetyl donor, and of ornithine by transacetylation between N(2)-acetylornithine and glutamate. This chain is Arginine biosynthesis bifunctional protein ArgJ, found in Neisseria meningitidis serogroup A / serotype 4A (strain DSM 15465 / Z2491).